Reading from the N-terminus, the 230-residue chain is RNA chaperone ProQ (230 aa).

The segment covering 105–125 (EAKARVQAQREQHQAKKREAG) has biased composition (basic and acidic residues). The segment at 105-182 (EAKARVQAQR…EQRKPVTDTT (78 aa)) is disordered. The segment covering 154–167 (PSRPQAARPASAPR) has biased composition (low complexity). Over residues 168-178 (AESRVEQRKPV) the composition is skewed to basic and acidic residues.

The protein belongs to the ProQ family.

It localises to the cytoplasm. RNA chaperone with significant RNA binding, RNA strand exchange and RNA duplexing activities. May regulate ProP activity through an RNA-based, post-transcriptional mechanism. The chain is RNA chaperone ProQ from Erwinia tasmaniensis (strain DSM 17950 / CFBP 7177 / CIP 109463 / NCPPB 4357 / Et1/99).